The primary structure comprises 79 residues: Apolipoprotein C-II (79 aa).

Positions 1–21 (MDLKVVAVSFLLLVLCSEAAG) are cleaved as a signal peptide. Residues 45–52 (GVEKLRDI) are lipid binding. Residues 56 to 79 (SVDAVGTYTSILTDQLYHWWCGEQ) form a lipoprotein lipase cofactor region.

It belongs to the apolipoprotein C2 family. Post-translationally, proapolipoprotein C-II is synthesized as a sialic acid containing glycoprotein which is subsequently desialylated prior to its proteolytic processing. Proapolipoprotein C-II, the major form found in plasma undergoes proteolytic cleavage of its N-terminal hexapeptide to generate apolipoprotein C-II, which occurs as the minor form in plasma.

It is found in the secreted. Component of chylomicrons, very low-density lipoproteins (VLDL), low-density lipoproteins (LDL), and high-density lipoproteins (HDL) in plasma. Plays an important role in lipoprotein metabolism as an activator of lipoprotein lipase. Both proapolipoprotein C-II and apolipoprotein C-II can activate lipoprotein lipase. This is Apolipoprotein C-II (APOC2) from Alligator mississippiensis (American alligator).